Reading from the N-terminus, the 399-residue chain is S-adenosylmethionine synthase (399 aa).

Residue 136–141 (GTGSAD) participates in ATP binding.

It belongs to the AdoMet synthase 2 family. The cofactor is Mg(2+).

The enzyme catalyses L-methionine + ATP + H2O = S-adenosyl-L-methionine + phosphate + diphosphate. It functions in the pathway amino-acid biosynthesis; S-adenosyl-L-methionine biosynthesis; S-adenosyl-L-methionine from L-methionine: step 1/1. Its function is as follows. Catalyzes the formation of S-adenosylmethionine from methionine and ATP. The sequence is that of S-adenosylmethionine synthase from Methanothrix thermoacetophila (strain DSM 6194 / JCM 14653 / NBRC 101360 / PT) (Methanosaeta thermophila).